The chain runs to 429 residues: MKKFDKSIAAFEEAQDLMPGGVNSPVRAFKSVGMNPLFMERGKGSKVYDIDGNEYIDYVLSWGPLIHGHANNRVVEALKAVAEKGTSFGAPTEIENKLAKLVIERVPSIEIVRMVNSGTEATMSALRLARGYTGRNKILKFIGCYHGHGDSLLIKAGSGVATLGLPDSPGVPEGVAKNTITVAYNDLESVKYAFEQFGDDIACVIVEPVAGNMGVVPPQPGFLEGLREVTEQNGALLIFDEVMTGFRVAYNCGQGYYGVTPDLTCLGKVIGGGLPVGAYGGKAEIMRQVAPSGPIYQAGTLSGNPLAMAAGYETLVQLTPESYVEFERKAEMLEAGLRKAAEKHGIPHHINRAGSMIGIFFTDEPVINYDAAKSSNLEFFAAYYREMVEQGVFLPPSQFEGLFLSTAHSDADIEATIAAAEIAMSKLKA.

Position 268 is an N6-(pyridoxal phosphate)lysine (Lys-268).

Belongs to the class-III pyridoxal-phosphate-dependent aminotransferase family. HemL subfamily. In terms of assembly, homodimer. Requires pyridoxal 5'-phosphate as cofactor.

Its subcellular location is the cytoplasm. It carries out the reaction (S)-4-amino-5-oxopentanoate = 5-aminolevulinate. It participates in porphyrin-containing compound metabolism; protoporphyrin-IX biosynthesis; 5-aminolevulinate from L-glutamyl-tRNA(Glu): step 2/2. This Bacillus cereus (strain ATCC 10987 / NRS 248) protein is Glutamate-1-semialdehyde 2,1-aminomutase 2.